We begin with the raw amino-acid sequence, 154 residues long: Myoglobin (154 aa).

The Globin domain maps to 2 to 148; that stretch reads GLSDQEWQQV…FRNDMASKYK (147 aa). Histidine 65 contributes to the nitrite binding site. Histidine 65 serves as a coordination point for O2. Histidine 94 is a binding site for heme b.

Monomeric.

The protein localises to the cytoplasm. It is found in the sarcoplasm. The catalysed reaction is Fe(III)-heme b-[protein] + nitric oxide + H2O = Fe(II)-heme b-[protein] + nitrite + 2 H(+). It catalyses the reaction H2O2 + AH2 = A + 2 H2O. Its function is as follows. Monomeric heme protein which primary function is to store oxygen and facilitate its diffusion within muscle tissues. Reversibly binds oxygen through a pentacoordinated heme iron and enables its timely and efficient release as needed during periods of heightened demand. Depending on the oxidative conditions of tissues and cells, and in addition to its ability to bind oxygen, it also has a nitrite reductase activity whereby it regulates the production of bioactive nitric oxide. Under stress conditions, like hypoxia and anoxia, it also protects cells against reactive oxygen species thanks to its pseudoperoxidase activity. The sequence is that of Myoglobin (MB) from Struthio camelus (Common ostrich).